A 1937-amino-acid polypeptide reads, in one-letter code: MSAGSDAEMAIFGEAAPYLRKSEKERIEAQNKPFDAKTSVFVAEPKESYVKSVIQSKDGGKVTVKTESGATLTVKEDQVFPMNPPKYDKIEDMAMMTHLHEPGVLYNLKERYAAWMIYTYSGLFCVTVNPYKWLPVYNPEVVAAYRGKKRQEAPPHIFSISDNAYQFMLTDRENQSILITGESGAGKTVNTKRVIQYFATIAVTGDKKKEESGKMQGTLEDQIISANPLLEAFGNAKTVRNDNSSRFGKFIRIHFGTTGKLASADIETYLLEKSRVTFQLKAERSYHIFYQITSNKKPELIEMLLITTNPYDYAFVSQGEITVPSIDDQEELMATDSAIDILGFSPEEKVSIYKLTGAVMHYGNMKFKQKQREEQAEPDGTEVADKAAYLQCLNSADLLKALCYPRVKVGNEYVTKGQTVQQVYNAVGALAKAVYEKMFLWMVTRINQQLDTKQPRQYFIGVLDIAGFEIFDFNSLEQLCINFTNEKLQQFFNHHMFVLEQEEYKKEGIEWTFIDFGMDLAACIELIEKPLGIFSILEEECMFPKATDTSFKNKLYDQHLGKSNNFQKPKPTKGKAEAHFSLVHYAGTVDYNITGWLDKNKDPLNDTVVGLYQKSAMKTLASLFSTYASAEADGGAKKGAKKKGSSFQTVSALFRENLNKLMTNLRSTHPHFVRCIIPNETKTPGAMEHELVLHQLRCNGVLEGIRICRKGFPSRILYGDFKQRYKVLNASAIPEGQFIDSKKASEKLLGSIDIDHTQYKFGHTKVFFKAGLLGLLEEMRDEKLAQIITRTQAVCRGYLMRVEYQKMLLRRESIFCIQYNVRAFMNVKHWPWMKLFFKIKPLLKSAETEKEMATMKEEFQKTKDELAKSEAKRKELEEKMVTLLKEKNDLQLQVQSEADSLADAEERCEQLIKNKIQLEAKIKEVTERAEDEEEINAELTAKKRKLEDECSELKKDIDDLELTLAKVEKEKHATENKVKNLTEEMAGLDENIAKLTKEKKALQEAHQQTLDDLQAEEDKVNTLTKAKTKLEQQVDDLEGSLEQEKKLRMDLERAKRKLEGDLKLAQESTMDIENDKQQLDEKLKKKEFEISNLISKIEDEQAVEIQLQKKIKELQARIEELEEEIEAERASRAKAEKQRSDLSRELEEISERLEEAGGATSAQVEMNKKRETEFQKLRRDLEEATLQHEATAAALRKKHADSVAELGEQIDNLQRVKQKLEKEKSELKMEIDDLSSNAEAIAKAKGNLEKMCRTLEDQVSELKSKEEEQQRLINELTAQRARLQTEAGEYSRQLDEKDALVSQLSRSKQASTQQIEELKRQLEEETKAKNALAHALQSSRHDCDLLREQYEEEQEGKAELQRALSKANSEVAQWRTKYETDAIQRTEELEEAKKKLAQRLQAAEEHVEAVNAKCASLEKTKQRLQNEVEDLMIDVERTNAACAALDKKQRNFDKVLSEWRQKYEETQAELESCQKESRTLSTELFKVKNAYEESLDHLETLRRENKNLQQEISDLTEQIAEGGKHIHELEKIKKQVEQEKCEIQAALEEAEASLEHEEGKILRIQLELNQVKSEIDRKIAEKDEEIDQLKRNHVRVVETMQSTLDAEIRSRNDALRVKKKMEGDLNEMEIQLNHANRLAAESLRNYRNTQGILKDTQLHLDDALRGQEDLKEQLAIVERRANLLQAEIEELRATLEQTERSRKIAEQELLDASERVQLLHTQNTSLINTKKKLENDVSQLQSEVEEVIQESRNAEEKAKKAITDAAMMAEELKKEQDTSAHLERMKKNMEQTVKDLQHRLDEAEQLALKGGKKQIQKLEARVRELEGEVENEQKRNAEAVKGLRKHERRVKELTYQTEEDRKNVLRLQDLVDKLQAKVKSYKRQAEEAEEQSNANLAKFRKLQHELEEAEERADIAESQVNKLRVKSREVHTKISAE.

Positions 35-84 (DAKTSVFVAEPKESYVKSVIQSKDGGKVTVKTESGATLTVKEDQVFPMNP) constitute a Myosin N-terminal SH3-like domain. Phosphothreonine occurs at positions 66 and 71. The Myosin motor domain occupies 88–781 (DKIEDMAMMT…LLGLLEEMRD (694 aa)). Lys-132 is modified (N6,N6,N6-trimethyllysine). 181–188 (GESGAGKT) serves as a coordination point for ATP. A Phosphotyrosine modification is found at Tyr-389. Residue Thr-419 is modified to Phosphothreonine. Phosphotyrosine is present on Tyr-424. Ser-625 is subject to Phosphoserine. An actin-binding region spans residues 658–680 (LNKLMTNLRSTHPHFVRCIIPNE). Position 756 is a pros-methylhistidine (His-756). Positions 760–774 (KFGHTKVFFKAGLLG) are actin-binding. Residues 781–813 (DEKLAQIITRTQAVCRGYLMRVEYQKMLLRRES) form the IQ domain. Residues 842-1937 (LLKSAETEKE…REVHTKISAE (1096 aa)) are a coiled coil. Residues Ser-1091 and Ser-1095 each carry the phosphoserine modification. The segment at 1125–1171 (IEAERASRAKAEKQRSDLSRELEEISERLEEAGGATSAQVEMNKKRE) is disordered. Residues 1127–1155 (AERASRAKAEKQRSDLSRELEEISERLEE) show a composition bias toward basic and acidic residues. Phosphoserine occurs at positions 1161 and 1236. The residue at position 1254 (Thr-1254) is a Phosphothreonine. Ser-1260 carries the post-translational modification Phosphoserine. The residue at position 1285 (Thr-1285) is a Phosphothreonine. Residues Ser-1291, Ser-1302, and Ser-1305 each carry the phosphoserine modification. Tyr-1463 bears the Phosphotyrosine mark. Position 1466 is a phosphothreonine (Thr-1466). Tyr-1491 is modified (phosphotyrosine). At Ser-1494 the chain carries Phosphoserine. At Thr-1500 the chain carries Phosphothreonine. Residue Ser-1513 is modified to Phosphoserine. A Phosphothreonine modification is found at Thr-1516. A phosphoserine mark is found at Ser-1553, Ser-1573, Ser-1602, Ser-1713, and Ser-1725. Phosphothreonine is present on Thr-1729. Position 1738 is a phosphoserine (Ser-1738).

Belongs to the TRAFAC class myosin-kinesin ATPase superfamily. Myosin family. As to quaternary structure, muscle myosin is a hexameric protein that consists of 2 heavy chain subunits (MHC), 2 alkali light chain subunits (MLC) and 2 regulatory light chain subunits (MLC-2).

It localises to the cytoplasm. The protein resides in the myofibril. Functionally, muscle contraction. The sequence is that of Myosin-8 (Myh8) from Mus musculus (Mouse).